Reading from the N-terminus, the 523-residue chain is Cytokinin dehydrogenase 3 (523 aa).

The N-terminal stretch at 1–31 is a signal peptide; sequence MASYNLRSQVRLIAITIVIIITLSTPITTNT. An FAD-binding PCMH-type domain is found at 66 to 243; that stretch reads TKIFPSAVLI…TRARIKLEVA (178 aa). FAD is bound by residues alanine 100, glycine 102, and glycine 104. Histidine 105 bears the Pros-8alpha-FAD histidine mark. FAD contacts are provided by serine 106 and glutamine 110. N-linked (GlcNAc...) asparagine glycosylation occurs at asparagine 153. FAD contacts are provided by aspartate 167, threonine 172, serine 178, isoleucine 182, and isoleucine 233. N-linked (GlcNAc...) asparagine glycosylation is present at asparagine 408. Positions 476, 511, and 514 each coordinate FAD.

Belongs to the oxygen-dependent FAD-linked oxidoreductase family. It depends on FAD as a cofactor. Very weak expression in the young shoot tissues around two weeks after germination. Present in the center of the floral meristem and the boundary between long stamen primordia and gynoecial primordia.

It is found in the endoplasmic reticulum. The protein resides in the vacuole. It catalyses the reaction N(6)-dimethylallyladenine + A + H2O = 3-methyl-2-butenal + adenine + AH2. Its function is as follows. Catalyzes the oxidation of cytokinins, a family of N(6)-substituted adenine derivatives that are plant hormones, where the substituent is an isopentenyl group. Catalyzes in vitro the oxidation of various types of cytokinin nucleotides that are known as direct products of cytokinin biosynthesis. In association with CKX5 regulates the activity of the reproductive meristems, flower organ size and ovule formation. This is Cytokinin dehydrogenase 3 (CKX3) from Arabidopsis thaliana (Mouse-ear cress).